The sequence spans 126 residues: DNA-directed RNA polymerase subunit omega (126 aa).

The protein belongs to the RNA polymerase subunit omega family. As to quaternary structure, the RNAP catalytic core consists of 2 alpha, 1 beta, 1 beta' and 1 omega subunit. When a sigma factor is associated with the core the holoenzyme is formed, which can initiate transcription.

The catalysed reaction is RNA(n) + a ribonucleoside 5'-triphosphate = RNA(n+1) + diphosphate. In terms of biological role, promotes RNA polymerase assembly. Latches the N- and C-terminal regions of the beta' subunit thereby facilitating its interaction with the beta and alpha subunits. The chain is DNA-directed RNA polymerase subunit omega from Rickettsia bellii (strain OSU 85-389).